The following is a 438-amino-acid chain: MEGAGGKPTAVVAVVTEPRFTQRYREYLEKHKLLDRQHRVKKLRDGTVALPVLREALLEQHLRELRNRVAPGSTCVPTQLLDPVPSKKAQSYSPAQRLCLEVSRWVEGRGVTWSAKLEADLPRSWQRHGDLLLLSEDCFQAKQWRHLEPELWETVASALGAQRLAKRGRVSPDSTRTPAVSLLLGDHGWVEHVDNGIRYKFDVTQCMFSFGNITEKLRVASLPCVGEVLVDLYAGIGYFTLPFLVHAEAAFVHACEWNPHAVVALRNNLELNGVADRCQIHFGDNRKLKLSNVADRVNLGLIPSSEEGWPIACRVLKQDAGGILHIHQNVESFPGKTLQPPGSSEMEEHWPSPHQIISNQLNNGATSDSRRKTLSVATKPEWQRWAKAAETRIATLLHQVHGKRWKTQILHIQPVKSYAPHVDHIVLDLECRPCHLVG.

Residues Ser-209, Lys-216, Glu-256, and 284–285 (DN) each bind S-adenosyl-L-methionine.

Belongs to the class I-like SAM-binding methyltransferase superfamily. TRM5/TYW2 family.

It carries out the reaction 4-demethylwyosine(37) in tRNA(Phe) + S-adenosyl-L-methionine = 4-demethyl-7-[(3S)-3-amino-3-carboxypropyl]wyosine(37) in tRNA(Phe) + S-methyl-5'-thioadenosine + H(+). The protein operates within tRNA modification; wybutosine-tRNA(Phe) biosynthesis. In terms of biological role, S-adenosyl-L-methionine-dependent transferase that acts as a component of the wybutosine biosynthesis pathway. Wybutosine is a hyper modified guanosine with a tricyclic base found at the 3'-position adjacent to the anticodon of eukaryotic phenylalanine tRNA. Catalyzes the transfer of the alpha-amino-alpha-carboxypropyl (acp) group from S-adenosyl-L-methionine to the C-7 position of 4-demethylwyosine (imG-14) to produce wybutosine-86. The chain is tRNA wybutosine-synthesizing protein 2 homolog (TRMT12) from Bos taurus (Bovine).